Here is a 275-residue protein sequence, read N- to C-terminus: MKKVVKLNNIKIGNDLQFVLIAGPCQIEGKDHALFMAEKLMKLTSKLSIPFIYKSSFDKANRTSINGIRGLGIEKGLEILSKVKSEFDCPIITDVHSESQCIETAKVVDILQIPAFLCRQTDLLKAAAKTGKIVKVKKGQFLAPWDMKNVQKKLEVFGAKDILFTERGSCFGYNNLVSDMRSLAIMSELNVPVVFDATHSVQQPGGRGGSSGGERKYVELLAKAAISVGIAGIYMEVHQDPDNAPSDGPCMIKLDNLESILIKLKKYDKITKEIV.

This sequence belongs to the KdsA family.

The protein localises to the cytoplasm. It carries out the reaction D-arabinose 5-phosphate + phosphoenolpyruvate + H2O = 3-deoxy-alpha-D-manno-2-octulosonate-8-phosphate + phosphate. The protein operates within carbohydrate biosynthesis; 3-deoxy-D-manno-octulosonate biosynthesis; 3-deoxy-D-manno-octulosonate from D-ribulose 5-phosphate: step 2/3. Its pathway is bacterial outer membrane biogenesis; lipopolysaccharide biosynthesis. The polypeptide is 2-dehydro-3-deoxyphosphooctonate aldolase (kdsA) (Rickettsia prowazekii (strain Madrid E)).